Here is a 504-residue protein sequence, read N- to C-terminus: uncharacterized protein (504 aa).

Positions 1-212 are excised as a propeptide; sequence MFMKSKAAGS…LYKTQDPVLD (212 aa).

This is an uncharacterized protein from Deinococcus radiodurans (strain ATCC 13939 / DSM 20539 / JCM 16871 / CCUG 27074 / LMG 4051 / NBRC 15346 / NCIMB 9279 / VKM B-1422 / R1).